Reading from the N-terminus, the 260-residue chain is Histidine-binding periplasmic protein (260 aa).

An N-terminal signal peptide occupies residues 1 to 22 (MKKLVLSLSLVLAFSSATAAFA). Cysteines 60 and 67 form a disulfide. Serine 91, serine 92, serine 94, arginine 99, threonine 143, and aspartate 183 together coordinate L-histidine.

This sequence belongs to the bacterial solute-binding protein 3 family. In terms of assembly, the complex is composed of two ATP-binding proteins (HisP), two transmembrane proteins (HisM and HisQ) and a solute-binding protein (HisJ).

The protein localises to the periplasm. Its function is as follows. Part of the ABC transporter complex HisPMQJ involved in histidine transport. Binds histidine. Interacts with HisQMP and stimulates ATPase activity of HisP, which results in histidine translocation. This is Histidine-binding periplasmic protein (hisJ) from Escherichia coli O157:H7.